The chain runs to 257 residues: Flap endonuclease Xni (257 aa).

D109 provides a ligand contact to Mg(2+). Residues 165–255 form the 5'-3' exonuclease domain; it reads LKPEQLADYW…FNLQDIRYEK (91 aa). K(+)-binding residues include L176, A177, I187, and I190. The tract at residues 189–194 is interaction with DNA; the sequence is GIGPKA.

This sequence belongs to the Xni family. Mg(2+) is required as a cofactor. Requires K(+) as cofactor.

Its function is as follows. Has flap endonuclease activity. During DNA replication, flap endonucleases cleave the 5'-overhanging flap structure that is generated by displacement synthesis when DNA polymerase encounters the 5'-end of a downstream Okazaki fragment. This chain is Flap endonuclease Xni, found in Aliivibrio salmonicida (strain LFI1238) (Vibrio salmonicida (strain LFI1238)).